A 45-amino-acid chain; its full sequence is Keratin-associated protein 22-2 (45 aa).

The protein belongs to the KRTAP type 20 family. As to quaternary structure, interacts with hair keratins.

In terms of biological role, in the hair cortex, hair keratin intermediate filaments are embedded in an interfilamentous matrix, consisting of hair keratin-associated proteins (KRTAP), which are essential for the formation of a rigid and resistant hair shaft through their extensive disulfide bond cross-linking with abundant cysteine residues of hair keratins. The matrix proteins include the high-sulfur and high-glycine-tyrosine keratins. In Homo sapiens (Human), this protein is Keratin-associated protein 22-2 (KRTAP22-2).